The primary structure comprises 300 residues: Tegument protein VP22 (300 aa).

The segment at 1–148 (MTSRRSVKSC…PARGRRPAQA (148 aa)) is disordered. 2 stretches are compositionally biased toward basic and acidic residues: residues 10–22 (CPREAPRGTHEEL) and 50–61 (PRGEVRFLHYDE). Positions 163-166 (GRTK) match the Nuclear localization signal motif. The interval 174-267 (KKLHFSTAPP…LVNPDAAQDV (94 aa)) is interaction with gE. A Nuclear export signal motif is present at residues 232-244 (LNELLDLTTIRVT). A compositionally biased stretch (low complexity) spans 269-292 (ATAAARGRPAGRAAATARAPARSA). Residues 269 to 300 (ATAAARGRPAGRAAATARAPARSASRPRRPLE) form a disordered region.

Belongs to the alphaherpesvirinae VP22 tegument protein family. In terms of assembly, interacts with gE (via C-terminus); this interaction is necessary for the recruitment of VP22 to the Golgi and its packaging into virions. Interacts with gM (via C-terminus). Interacts with VP16; this interaction allows the formation of a tripartite complex composed of VP16, VP22 and UL41/VHS. Interacts with the capsid-binding protein UL16. Interacts with host CGAS. Post-translationally, highly phosphorylated in the host cell. Packaging is selective for underphosphorylated forms.

It localises to the virion tegument. It is found in the host cytoplasm. Its subcellular location is the host nucleus. The protein resides in the host Golgi apparatus. Functionally, tegument protein that plays different roles during the time course of infection. Participates in both the accumulation of viral mRNAs and viral protein translation at late time of infection. Modulates the RNase activity of the virion host shutoff protein UL41 probably to ensure necessary levels of key cellular mRNAs and proteins. Plays a role in microtubule reorganization that occurs after viral infection by stabilizing microtubule network. Plays a role in the inhibition of host innate immune system by targeting the CGAS enzymatic activity which is the principal cytosolic DNA sensor that detects invading viral DNA. Acts by mediating disruption of liquid-like droplets in which CGAS is activated, thereby preventing CGAS activity. This is Tegument protein VP22 from Homo sapiens (Human).